The sequence spans 466 residues: Cysteine--tRNA ligase (466 aa).

Cys28 contributes to the Zn(2+) binding site. The 'HIGH' region signature appears at 30–40; that stretch reads PTVYNFFHIGN. Residues Cys208, His233, and Glu237 each contribute to the Zn(2+) site. The short motif at 265 to 269 is the 'KMSKS' region element; it reads KMSKS. Lys268 provides a ligand contact to ATP.

This sequence belongs to the class-I aminoacyl-tRNA synthetase family. As to quaternary structure, monomer. Zn(2+) is required as a cofactor.

It is found in the cytoplasm. It catalyses the reaction tRNA(Cys) + L-cysteine + ATP = L-cysteinyl-tRNA(Cys) + AMP + diphosphate. The sequence is that of Cysteine--tRNA ligase from Clostridium perfringens (strain ATCC 13124 / DSM 756 / JCM 1290 / NCIMB 6125 / NCTC 8237 / Type A).